A 101-amino-acid polypeptide reads, in one-letter code: Interleukin-8 (101 aa).

The N-terminal stretch at 1-22 is a signal peptide; it reads MTSKLAVALLAAFLLSAALCEG. Arginine 27 carries the citrulline modification. Intrachain disulfides connect cysteine 34-cysteine 61 and cysteine 36-cysteine 77.

The protein belongs to the intercrine alpha (chemokine CxC) family. As to quaternary structure, homodimer. Interacts with TNFAIP6 (via Link domain); this interaction interferes with chemokine binding to glycosaminoglycans. Citrullination at Arg-27 prevents proteolysis, and dampens tissue inflammation, it also enhances leukocytosis, possibly through impaired chemokine clearance from the blood circulation.

Its subcellular location is the secreted. In terms of biological role, chemotactic factor that mediates inflammatory response by attracting neutrophils, basophils, and T-cells to clear pathogens and protect the host from infection. Also plays an important role in neutrophil activation. Released in response to an inflammatory stimulus, exerts its effect by binding to the G-protein-coupled receptors CXCR1 and CXCR2, primarily found in neutrophils, monocytes and endothelial cells. G-protein heterotrimer (alpha, beta, gamma subunits) constitutively binds to CXCR1/CXCR2 receptor and activation by IL8 leads to beta and gamma subunits release from Galpha (GNAI2 in neutrophils) and activation of several downstream signaling pathways including PI3K and MAPK pathways. This Macaca mulatta (Rhesus macaque) protein is Interleukin-8 (CXCL8).